Here is a 420-residue protein sequence, read N- to C-terminus: Gamma-glutamyl phosphate reductase (420 aa).

This sequence belongs to the gamma-glutamyl phosphate reductase family.

It is found in the cytoplasm. The catalysed reaction is L-glutamate 5-semialdehyde + phosphate + NADP(+) = L-glutamyl 5-phosphate + NADPH + H(+). It functions in the pathway amino-acid biosynthesis; L-proline biosynthesis; L-glutamate 5-semialdehyde from L-glutamate: step 2/2. Its function is as follows. Catalyzes the NADPH-dependent reduction of L-glutamate 5-phosphate into L-glutamate 5-semialdehyde and phosphate. The product spontaneously undergoes cyclization to form 1-pyrroline-5-carboxylate. The protein is Gamma-glutamyl phosphate reductase of Streptococcus pneumoniae (strain ATCC 700669 / Spain 23F-1).